A 187-amino-acid chain; its full sequence is Large ribosomal subunit protein uL18 (187 aa).

It belongs to the universal ribosomal protein uL18 family. As to quaternary structure, part of the 50S ribosomal subunit. Interacts with proteins L5 and L21e, and attaches the 5S rRNA to the 23S rRNA. Has been cross-linked to L21e.

In terms of biological role, this is one of 5 proteins that mediate the attachment of the 5S rRNA onto the large ribosomal subunit, where it forms part of the central protuberance and stabilizes the orientation of adjacent RNA domains. The sequence is that of Large ribosomal subunit protein uL18 (rpl18) from Haloarcula marismortui (strain ATCC 43049 / DSM 3752 / JCM 8966 / VKM B-1809) (Halobacterium marismortui).